A 336-amino-acid polypeptide reads, in one-letter code: Eukaryotic translation initiation factor 3 subunit I (336 aa).

WD repeat units lie at residues 8–47 (GHER…RLGT), 50–91 (GHLG…KVWE), 146–185 (CTES…QLEN), 190–229 (EFDH…ILKT), and 287–326 (GHFG…FDFM).

Belongs to the eIF-3 subunit I family. As to quaternary structure, component of the eukaryotic translation initiation factor 3 (eIF-3) complex.

It localises to the cytoplasm. Its function is as follows. Component of the eukaryotic translation initiation factor 3 (eIF-3) complex, which is involved in protein synthesis of a specialized repertoire of mRNAs and, together with other initiation factors, stimulates binding of mRNA and methionyl-tRNAi to the 40S ribosome. The eIF-3 complex specifically targets and initiates translation of a subset of mRNAs involved in cell proliferation. The sequence is that of Eukaryotic translation initiation factor 3 subunit I (tif34) from Emericella nidulans (strain FGSC A4 / ATCC 38163 / CBS 112.46 / NRRL 194 / M139) (Aspergillus nidulans).